A 481-amino-acid polypeptide reads, in one-letter code: (S)-N-methylcoclaurine 3'-hydroxylase isozyme 1 (481 aa).

Residue Cys423 coordinates heme.

Belongs to the cytochrome P450 family. Heme is required as a cofactor. As to expression, restricted to the parietal region of sieve elements adjacent or proximal to laticifers in roots, stems, leaves, carpels and hypocotyls.

Its subcellular location is the endoplasmic reticulum. The enzyme catalyses (S)-N-methylcoclaurine + reduced [NADPH--hemoprotein reductase] + O2 = (S)-3'-hydroxy-N-methylcoclaurine + oxidized [NADPH--hemoprotein reductase] + H2O + H(+). The protein operates within alkaloid biosynthesis; (S)-reticuline biosynthesis; (S)-reticuline from (S)-norcoclaurine: step 3/4. In terms of biological role, cytochrome P450 monooxygenase involved in the biosynthesis of benzylisoquinoline alkaloids. Catalyzes the 3'-hydroxylation of (S)-N-methylcoclaurine. The sequence is that of (S)-N-methylcoclaurine 3'-hydroxylase isozyme 1 from Papaver somniferum (Opium poppy).